The chain runs to 71 residues: Conotoxin Pl071 (71 aa).

The N-terminal stretch at 1–20 is a signal peptide; sequence MSRLFMILLVICVITLGTDA. Positions 21–31 are excised as a propeptide; it reads SQAEDSGTEKR. Tyr69 is modified (tyrosine amide).

Belongs to the conotoxin NSf-1 superfamily. As to expression, expressed by the venom duct.

The protein resides in the secreted. Its function is as follows. Probable neurotoxin with unknown target. Possibly targets ion channels. The polypeptide is Conotoxin Pl071 (Conus planorbis (Planorbis cone)).